Here is a 757-residue protein sequence, read N- to C-terminus: Catalase-peroxidase 2 (757 aa).

The N-terminal stretch at 1–26 (MKHPLFNQKVLAGFVSMLLISGSAFA) is a signal peptide. The segment at residues 126 to 248 (WHSAGTYRTL…LGATHMGLIY (123 aa)) is a cross-link (tryptophyl-tyrosyl-methioninium (Trp-Tyr) (with M-274)). The active-site Proton acceptor is His127. The tryptophyl-tyrosyl-methioninium (Tyr-Met) (with W-126) cross-link spans 248-274 (YVNPEGPKGVPDPLGSAKNIRVAFERM). His289 is a heme b binding site.

It belongs to the peroxidase family. Peroxidase/catalase subfamily. Homodimer or homotetramer. It depends on heme b as a cofactor. In terms of processing, formation of the three residue Trp-Tyr-Met cross-link is important for the catalase, but not the peroxidase activity of the enzyme.

The enzyme catalyses H2O2 + AH2 = A + 2 H2O. The catalysed reaction is 2 H2O2 = O2 + 2 H2O. Functionally, bifunctional enzyme with both catalase and broad-spectrum peroxidase activity. The polypeptide is Catalase-peroxidase 2 (Shewanella frigidimarina (strain NCIMB 400)).